We begin with the raw amino-acid sequence, 228 residues long: Transcription repressor OFP8 (228 aa).

Low complexity-rich tracts occupy residues 1 to 14 (MSGRSSRRGSFSLR), 54 to 79 (ASSTSTTTAFTATTGGAGTATSTDSS), and 92 to 101 (EEPAAAQQEQ). Disordered stretches follow at residues 1–21 (MSGRSSRRGSFSLRQPPVVDI) and 36–143 (SSSS…QLQE). The segment covering 107–120 (RRRRRQQRRRRRRA) has biased composition (basic residues). In terms of domain architecture, OVATE spans 157 to 216 (VAVESAEPYEDFRESMVQMVVEKEIYAWDDLNDLLHQFLSLNSPRHHPLILHAFADLWTR).

In terms of assembly, interacts with GSK2. Post-translationally, phosphorylated on serine and threonine residues by GSK2. Dephosphorylated during response to brassinosteroid. As to expression, expressed in roots, stems, stem nodes, young leaves, leaf sheaths, lamina joints, young spikelets, inflorescences, stamens and ovaries, embryos and seeds.

It is found in the nucleus. The protein localises to the cytoplasm. Probable transcriptional repressor that regulates multiple aspects of plant growth and development, partly through brassinosteroid (BR) signaling pathway. Acts downstream of the kinase GSK2, a negative regulator of BR signaling. This Oryza sativa subsp. japonica (Rice) protein is Transcription repressor OFP8.